Reading from the N-terminus, the 852-residue chain is Cell surface glycoprotein (852 aa).

Residues 1–34 (MTDTTGKLRAVLLTALMVGSVIGAGVAFTGGAAA) form the signal peptide. An N-linked (GalNAc...) (glycosaminoglycan) asparagine glycan is attached at Asn-36. The interval 84-131 (KLDNEKEVSPATLSRTGGSDEGVPLQMPIPEDQSTGSYDSNGPDNDEA) is disordered. Over residues 115–126 (DQSTGSYDSNGP) the composition is skewed to polar residues. Asn-339, Asn-398, Asn-438, Asn-513, Asn-643, Asn-727, Asn-751, and Asn-787 each carry an N-linked (Glc...) asparagine glycan. The interval 772–828 (ELEEPDQTTVDQPENNQTMTTTMTETTTETTTEMTTTQENTTENGSEGTSDGESGGS) is disordered. Low complexity predominate over residues 785-823 (ENNQTMTTTMTETTTETTTEMTTTQENTTENGSEGTSDG). 14 O-linked (Gal...) threonine glycosylation sites follow: Thr-789, Thr-791, Thr-792, Thr-793, Thr-795, Thr-797, Thr-798, Thr-799, Thr-801, Thr-802, Thr-803, Thr-806, Thr-807, and Thr-808. N-linked (Glc...) asparagine glycosylation occurs at Asn-811. O-linked (Gal...) threonine glycosylation is found at Thr-812 and Thr-813. Asn-815 carries an N-linked (Glc...) asparagine glycan. A helical transmembrane segment spans residues 829–849 (IPGFGVGVALVAVLGAALLAL). A PGF sorting signal motif is present at residues 830–832 (PGF).

The protein belongs to the halobacterial S-layer protein family. N-linked glycan at Asn-36 consists of a glycosaminoglycan chain, constructed by a repeating sulfated pentasaccharide block composed of GlcNAc, GalNAc, Gal, GalA, 3-O-methyl-GalA, and sulfate in the molar ratio of 1:1:1:1:1:2; the other N-linked glycans contain Glc, GlcA and IdoA. In terms of processing, O-linked glycans consist of Glc-Gal disaccharides. Post-translationally, the C-terminus (residues 770-778) is lipidated with diphytanylglyceryl phosphate. Cleaved by the archaeosortase ArtA at the C-terminus, with removal of a short hydrophobic segment.

Its subcellular location is the secreted. The protein localises to the cell wall. It localises to the S-layer. It is found in the cell membrane. Functionally, S-layer protein. The S-layer is a paracrystalline mono-layered assembly of proteins which coat the surface of the cell. The sequence is that of Cell surface glycoprotein (csg) from Halobacterium salinarum (strain ATCC 29341 / DSM 671 / R1).